A 387-amino-acid polypeptide reads, in one-letter code: Type 2 DNA topoisomerase 6 subunit A (387 aa).

The 149-residue stretch at 12 to 160 (EARKKALAVF…MLILSKEKGK (149 aa)) folds into the Topo IIA-type catalytic domain. Tyr106 functions as the O-(5'-phospho-DNA)-tyrosine intermediate in the catalytic mechanism. Mg(2+) is bound by residues Glu207 and Asp259.

The protein belongs to the TOP6A family. Homodimer. Heterotetramer of two Top6A and two Top6B chains. The cofactor is Mg(2+).

It catalyses the reaction ATP-dependent breakage, passage and rejoining of double-stranded DNA.. In terms of biological role, relaxes both positive and negative superturns and exhibits a strong decatenase activity. This Hyperthermus butylicus (strain DSM 5456 / JCM 9403 / PLM1-5) protein is Type 2 DNA topoisomerase 6 subunit A.